Reading from the N-terminus, the 564-residue chain is Arginine--tRNA ligase (564 aa).

A 'HIGH' region motif is present at residues 122–132 (PNIAKPFSIGH).

It belongs to the class-I aminoacyl-tRNA synthetase family. As to quaternary structure, monomer.

It is found in the cytoplasm. It carries out the reaction tRNA(Arg) + L-arginine + ATP = L-arginyl-tRNA(Arg) + AMP + diphosphate. The chain is Arginine--tRNA ligase from Lactococcus lactis subsp. cremoris (strain SK11).